The chain runs to 61 residues: MPTTRQCSFCGHEIPPGTGLMYVRNDGTMLWFCSSKCRKSMLKYHRDPKKYKWTTRYMKVR.

Cysteine 7, cysteine 10, cysteine 33, and cysteine 37 together coordinate Zn(2+). A C4-type zinc finger spans residues 7–37 (CSFCGHEIPPGTGLMYVRNDGTMLWFCSSKC).

Belongs to the eukaryotic ribosomal protein eL24 family. Part of the 50S ribosomal subunit. Forms a cluster with proteins L3 and L14. Zn(2+) is required as a cofactor.

Functionally, binds to the 23S rRNA. This Saccharolobus islandicus (strain M.16.27) (Sulfolobus islandicus) protein is Large ribosomal subunit protein eL24.